The chain runs to 1000 residues: Receptor-type tyrosine-protein kinase FLT3 (1000 aa).

An N-terminal signal peptide occupies residues 1–27; that stretch reads MRALAQRSDRRLLLLVVLSVMILETVT. Residues 28-544 are Extracellular-facing; sequence NQDLPVIKCV…PFPFIQDNIS (517 aa). Intrachain disulfides connect Cys-36/Cys-66 and Cys-104/Cys-115. A glycan (N-linked (GlcNAc...) asparagine) is linked at Asn-44. The disordered stretch occupies residues 45 to 67; that stretch reads GSSAGKPSSYRMVRGSPEDLQCT. 2 N-linked (GlcNAc...) asparagine glycosylation sites follow: Asn-133 and Asn-152. Cystine bridges form between Cys-200–Cys-207 and Cys-273–Cys-331. An Ig-like C2-type domain is found at 254-344; it reads PQSTLPQLFL…KHPSQSALVT (91 aa). Residues Asn-307, Asn-324, and Asn-352 are each glycosylated (N-linked (GlcNAc...) asparagine). Intrachain disulfides connect Cys-369/Cys-408 and Cys-382/Cys-393. N-linked (GlcNAc...) asparagine glycosylation is found at Asn-445, Asn-474, Asn-503, and Asn-542. A helical membrane pass occupies residues 545–564; the sequence is FYATIGLCLPFIVVLIVLIC. Residues 565–992 lie on the Cytoplasmic side of the membrane; sequence HKYKKQFRYE…GSEPPSPQAQ (428 aa). Tyr-573 is subject to Phosphotyrosine. Ser-575 is modified (phosphoserine). Phosphotyrosine; by autocatalysis is present on residues Tyr-590 and Tyr-592. Residues 592-598 form an important for normal regulation of the kinase activity and for maintaining the kinase in an inactive state in the absence of ligand binding region; that stretch reads YVDFRDY. A Phosphotyrosine modification is found at Tyr-600. The 336-residue stretch at 611–946 folds into the Protein kinase domain; that stretch reads LEFGKVLGSG…PSFPNLTSFL (336 aa). ATP-binding positions include 617–625 and Lys-645; that span reads LGSGAFGRV. Phosphotyrosine; by autocatalysis is present on Tyr-727. At Ser-760 the chain carries Phosphoserine. Phosphotyrosine is present on residues Tyr-769 and Tyr-796. Residue Asp-814 is the Proton acceptor of the active site. Tyr-845 carries the phosphotyrosine; by autocatalysis modification. Phosphotyrosine occurs at positions 958 and 972. A disordered region spans residues 968–1000; it reads HPSIYQNRRPLSREAGSEPPSPQAQVKIHRERS. Ser-1000 is modified (phosphoserine).

Belongs to the protein kinase superfamily. Tyr protein kinase family. CSF-1/PDGF receptor subfamily. Monomer in the absence of bound FLT3LG. Homodimer in the presence of bound FLT3LG. Interacts with FIZ1 following ligand activation. Interacts with FES, FER, LYN, FGR, HCK, SRC and GRB2. Interacts with PTPRJ/DEP-1 and PTPN11/SHP2. Interacts with RNF115 and RNF126. Post-translationally, N-glycosylated, contains complex N-glycans with sialic acid. Autophosphorylated on several tyrosine residues in response to FLT3LG binding. FLT3LG binding also increases phosphorylation of mutant kinases that are constitutively activated. Dephosphorylated by PTPRJ/DEP-1, PTPN1, PTPN6/SHP-1, and to a lesser degree by PTPN12. Dephosphorylation is important for export from the endoplasmic reticulum and location at the cell membrane. In terms of processing, rapidly ubiquitinated by UBE2L6 and the E3 ubiquitin-protein ligase SIAH1 after autophosphorylation, leading to its proteasomal degradation. As to expression, hematopoietic stem and progenitor cell-enriched populations. Found in brain, placenta and testis.

The protein resides in the membrane. Its subcellular location is the endoplasmic reticulum lumen. The enzyme catalyses L-tyrosyl-[protein] + ATP = O-phospho-L-tyrosyl-[protein] + ADP + H(+). With respect to regulation, present in an inactive conformation in the absence of bound ligand. FLT3LG binding leads to dimerization and activation by autophosphorylation. In terms of biological role, tyrosine-protein kinase that acts as a cell-surface receptor for the cytokine FLT3LG and regulates differentiation, proliferation and survival of hematopoietic progenitor cells and of dendritic cells. Promotes phosphorylation of SHC1 and AKT1, and activation of the downstream effector MTOR. Promotes activation of RAS signaling and phosphorylation of downstream kinases, including MAPK1/ERK2 and/or MAPK3/ERK1. Promotes phosphorylation of FES, FER, PTPN6/SHP, PTPN11/SHP-2, PLCG1, and STAT5A and/or STAT5B. Activation of wild-type FLT3 causes only marginal activation of STAT5A or STAT5B. Mutations that cause constitutive kinase activity promote cell proliferation and resistance to apoptosis via the activation of multiple signaling pathways. The protein is Receptor-type tyrosine-protein kinase FLT3 (Flt3) of Mus musculus (Mouse).